A 124-amino-acid polypeptide reads, in one-letter code: Glycine cleavage system H protein (124 aa).

The 83-residue stretch at 22–104 (VATVGITEFA…YGAGWLFRVE (83 aa)) folds into the Lipoyl-binding domain. Lysine 63 is modified (N6-lipoyllysine).

Belongs to the GcvH family. The glycine cleavage system is composed of four proteins: P, T, L and H. It depends on (R)-lipoate as a cofactor.

Its function is as follows. The glycine cleavage system catalyzes the degradation of glycine. The H protein shuttles the methylamine group of glycine from the P protein to the T protein. In Beutenbergia cavernae (strain ATCC BAA-8 / DSM 12333 / CCUG 43141 / JCM 11478 / NBRC 16432 / NCIMB 13614 / HKI 0122), this protein is Glycine cleavage system H protein.